Reading from the N-terminus, the 74-residue chain is Translation initiation factor IF-1, chloroplastic (74 aa).

Residues 1 to 72 form the S1-like domain; that stretch reads MERQNLIEME…TKGRITYRLR (72 aa).

This sequence belongs to the IF-1 family. In terms of assembly, component of the 30S ribosomal translation pre-initiation complex which assembles on the 30S ribosome in the order IF-2 and IF-3, IF-1 and N-formylmethionyl-tRNA(fMet); mRNA recruitment can occur at any time during PIC assembly.

It is found in the plastid. The protein resides in the chloroplast. Its function is as follows. One of the essential components for the initiation of protein synthesis. Stabilizes the binding of IF-2 and IF-3 on the 30S subunit to which N-formylmethionyl-tRNA(fMet) subsequently binds. Helps modulate mRNA selection, yielding the 30S pre-initiation complex (PIC). Upon addition of the 50S ribosomal subunit IF-1, IF-2 and IF-3 are released leaving the mature 70S translation initiation complex. This Mesostigma viride (Green alga) protein is Translation initiation factor IF-1, chloroplastic.